A 197-amino-acid polypeptide reads, in one-letter code: Secreted RxLR effector protein 48 (197 aa).

The N-terminal stretch at 1–27 (MCCVSWNWVLACTFLLIFLSWWNCCND) is a signal peptide. Positions 58 to 79 (RLLRVNLAANAEVLTHEIEEEK) match the RxLR-dEER motif.

The protein belongs to the RxLR effector family.

The protein resides in the secreted. The protein localises to the host nucleus. It is found in the host cytoplasm. Functionally, secreted effector that completely suppresses the host cell death induced by cell death-inducing proteins. This Plasmopara viticola (Downy mildew of grapevine) protein is Secreted RxLR effector protein 48.